A 137-amino-acid polypeptide reads, in one-letter code: MILGIGTDLANIDRMEKTLARFGERFRNRVFTPLEQAKAERRADVAGTYAKRWAAKEACSKALGTGLRMGIAWKDMSVANLETGQPVMRLTGWAAERLASMTPPGHEAVVHVSLTDDHPWAQAFVVIEARPRAAPPA.

Aspartate 8 and glutamate 57 together coordinate Mg(2+).

It belongs to the P-Pant transferase superfamily. AcpS family. It depends on Mg(2+) as a cofactor.

It localises to the cytoplasm. The enzyme catalyses apo-[ACP] + CoA = holo-[ACP] + adenosine 3',5'-bisphosphate + H(+). Its function is as follows. Transfers the 4'-phosphopantetheine moiety from coenzyme A to a Ser of acyl-carrier-protein. The sequence is that of Holo-[acyl-carrier-protein] synthase from Cereibacter sphaeroides (strain ATCC 17023 / DSM 158 / JCM 6121 / CCUG 31486 / LMG 2827 / NBRC 12203 / NCIMB 8253 / ATH 2.4.1.) (Rhodobacter sphaeroides).